A 239-amino-acid polypeptide reads, in one-letter code: Probable transcriptional regulatory protein BPUM_0743 (239 aa).

This sequence belongs to the TACO1 family. YeeN subfamily.

The protein localises to the cytoplasm. The polypeptide is Probable transcriptional regulatory protein BPUM_0743 (Bacillus pumilus (strain SAFR-032)).